Consider the following 679-residue polypeptide: Enzymatic polyprotein (679 aa).

Residues 40–130 form a protease region; the sequence is LHCFVDTGAS…LYEPFIQFTD (91 aa). Aspartate 45 is a catalytic residue. One can recognise a Reverse transcriptase domain in the interval 272-452; it reads LKVIKPSKSP…KKINFLGLEI (181 aa).

It belongs to the caulimoviridae enzymatic polyprotein family.

The enzyme catalyses DNA(n) + a 2'-deoxyribonucleoside 5'-triphosphate = DNA(n+1) + diphosphate. Encodes for at least two polypeptides: protease (PR) and reverse transcriptase (RT). The protease processes the polyprotein in cis. Reverse transcriptase is multifunctional enzyme that converts the viral RNA genome into dsDNA in viral cytoplasmic capsids. This enzyme displays a DNA polymerase activity that can copy either DNA or RNA templates, and a ribonuclease H (RNase H) activity that cleaves the RNA strand of RNA-DNA heteroduplexes in a partially processive 3'- to 5'-endonucleasic mode. Neo-synthesized pregenomic RNA (pgRNA) are encapsidated, and reverse-transcribed inside the nucleocapsid. Partial (+)DNA is synthesized from the (-)DNA template and generates the relaxed circular DNA (RC-DNA) genome. After budding and infection, the RC-DNA migrates in the nucleus, and is converted into a plasmid-like covalently closed circular DNA (cccDNA). This Arabidopsis thaliana (Mouse-ear cress) protein is Enzymatic polyprotein.